A 212-amino-acid polypeptide reads, in one-letter code: Uridine kinase (212 aa).

13-20 is an ATP binding site; that stretch reads GGSGSGKT.

Belongs to the uridine kinase family.

Its subcellular location is the cytoplasm. The enzyme catalyses uridine + ATP = UMP + ADP + H(+). The catalysed reaction is cytidine + ATP = CMP + ADP + H(+). It functions in the pathway pyrimidine metabolism; CTP biosynthesis via salvage pathway; CTP from cytidine: step 1/3. It participates in pyrimidine metabolism; UMP biosynthesis via salvage pathway; UMP from uridine: step 1/1. This chain is Uridine kinase, found in Bacillus anthracis (strain A0248).